A 171-amino-acid polypeptide reads, in one-letter code: 3-hydroxyanthranilate 3,4-dioxygenase (171 aa).

R45 contacts O2. H49, E55, and H93 together coordinate Fe cation. Position 55 (E55) interacts with substrate. 2 residues coordinate substrate: R97 and E107. Residues C122, C125, C159, and C162 each coordinate a divalent metal cation.

This sequence belongs to the 3-HAO family. Requires Fe(2+) as cofactor.

It localises to the cytoplasm. The enzyme catalyses 3-hydroxyanthranilate + O2 = (2Z,4Z)-2-amino-3-carboxymuconate 6-semialdehyde. Its pathway is cofactor biosynthesis; NAD(+) biosynthesis; quinolinate from L-kynurenine: step 3/3. Functionally, catalyzes the oxidative ring opening of 3-hydroxyanthranilate to 2-amino-3-carboxymuconate semialdehyde, which spontaneously cyclizes to quinolinate. The chain is 3-hydroxyanthranilate 3,4-dioxygenase from Candida albicans (strain SC5314 / ATCC MYA-2876) (Yeast).